Here is a 1369-residue protein sequence, read N- to C-terminus: Microtubule-associated tumor suppressor candidate 2 (1369 aa).

Disordered regions lie at residues 180–262 (ASSS…TQTV), 374–442 (GRGN…FIPN), 477–509 (GENKTEVPEPLDPQSGRSEARESKEVTTSVAEN), 582–627 (NTSP…EERT), 791–839 (RSSA…LRPP), 861–992 (SSVS…QARE), and 1331–1369 (WKLQTGDPTSPIKLSPTSPVYRGSSSGPSSPARVSTTPR). 2 stretches are compositionally biased toward polar residues: residues 246-262 (PSTSESKQSTPSETQTV) and 392-401 (LHTTPKQGSA). Residues 641 to 980 (RPKIITYIRR…PKQRTAAARN (340 aa)) are mediates interaction with MAPRE1. A sufficient for interaction with KIF2C region spans residues 801–890 (GPITTATSLY…TRSTFGNEEQ (90 aa)). A localization to the growing distal tip of microtubules region spans residues 801–1150 (GPITTATSLY…HDAALLEMEN (350 aa)). A compositionally biased stretch (polar residues) spans 804–814 (TTATSLYSSDP). Low complexity predominate over residues 821–834 (ASSSNAAKSNLPKS). The span at 937 to 947 (TKKDAQKDQDT) shows a compositional bias: basic and acidic residues. Positions 991 to 1335 (REAERQLVLR…NEELLWKLQT (345 aa)) form a coiled coil. Positions 1348–1369 (SPVYRGSSSGPSSPARVSTTPR) are enriched in low complexity.

It in the C-terminal section; belongs to the MTUS1 family. In terms of assembly, homodimer. Interacts with KIF2C and MAPRE1; the interaction is direct and probably targets MTUS2 and KIF2C to microtubules. Detected in embryonic stem cells differentiating to cardiomyocytes.

The protein localises to the cytoplasm. Its subcellular location is the cytoskeleton. Functionally, binds microtubules. Together with MAPRE1 may target the microtubule depolymerase KIF2C to the plus-end of microtubules. May regulate the dynamics of microtubules at their growing distal tip. The chain is Microtubule-associated tumor suppressor candidate 2 (MTUS2) from Homo sapiens (Human).